The sequence spans 1440 residues: Gag-Pro-Pol polyprotein (1440 aa).

Glycine 2 carries N-myristoyl glycine; by host lipidation. The segment at 93 to 117 is disordered; that stretch reads AREAPPSAPPADDPQKPPPYPEHAQ. The PTAP/PSAP motif motif lies at 98-101; that stretch reads PSAP. The span at 98–113 shows a compositional bias: pro residues; that stretch reads PSAPPADDPQKPPPYP. The PPXY motif motif lies at 109 to 112; sequence PPPY. 2 consecutive CCHC-type zinc fingers follow at residues 349 to 366 and 372 to 389; these read QPCF…DCKQ and GPCP…DCPQ. The 79-residue stretch at 457–535 folds into the Peptidase A2 domain; sequence VQALLDTGAD…DQWTILGRDA (79 aa). Aspartate 462 acts as the For protease activity; shared with dimeric partner in catalysis. Positions 593 to 783 constitute a Reverse transcriptase domain; the sequence is LEAKHIEPYQ…GSIHFLGQVI (191 aa). 9 residues coordinate Mg(2+): aspartate 659, aspartate 734, aspartate 735, aspartate 1019, glutamate 1052, aspartate 1074, aspartate 1135, aspartate 1208, and aspartate 1265. Residues 1010–1143 form the RNase H type-1 domain; that stretch reads IDHAPCLFSD…TDALMLAPLL (134 aa). The Integrase catalytic domain occupies 1197-1366; the sequence is RGHAPNVIWQ…PSIPENTLPP (170 aa). The integrase-type DNA-binding region spans 1371 to 1420; it reads KWYYYKIPGLTNPRWSGPVQSLKEAAGAALIPVGGSHLWIPWRLLKRGIC.

In terms of assembly, interacts with human TSG101. This interaction is essential for budding and release of viral particles. Requires Mg(2+) as cofactor. Specific enzymatic cleavages by the viral protease yield mature proteins. The polyprotein is cleaved during and after budding, this process is termed maturation. The protease is autoproteolytically processed at its N- and C-termini.

It localises to the virion. The enzyme catalyses Endonucleolytic cleavage to 5'-phosphomonoester.. It carries out the reaction DNA(n) + a 2'-deoxyribonucleoside 5'-triphosphate = DNA(n+1) + diphosphate. Matrix protein p19 targets Gag, Gag-Pro and Gag-Pro-Pol polyproteins to the plasma membrane via a multipartite membrane binding signal, that includes its myristoylated N-terminus. Also mediates nuclear localization of the preintegration complex. Functionally, capsid protein p24 forms the conical core of the virus that encapsulates the genomic RNA-nucleocapsid complex. Its function is as follows. Nucleocapsid protein p15 is involved in the packaging and encapsidation of two copies of the genome. In terms of biological role, the aspartyl protease mediates proteolytic cleavages of Gag, Gag-Pro and Gag-Pro-Pol polyproteins during or shortly after the release of the virion from the plasma membrane. Cleavages take place as an ordered, step-wise cascade to yield mature proteins. This process is called maturation. Displays maximal activity during the budding process just prior to particle release from the cell. Hydrolyzes host EIF4GI in order to shut off the capped cellular mRNA translation. The resulting inhibition of cellular protein synthesis serves to ensure maximal viral gene expression and to evade host immune response. Reverse transcriptase (RT) is a multifunctional enzyme that converts the viral RNA genome into dsDNA in the cytoplasm, shortly after virus entry into the cell. This enzyme displays a DNA polymerase activity that can copy either DNA or RNA templates, and a ribonuclease H (RNase H) activity that cleaves the RNA strand of RNA-DNA heteroduplexes in a partially processive 3' to 5'-endonucleasic mode. Conversion of viral genomic RNA into dsDNA requires many steps. A tRNA-Pro binds to the primer-binding site (PBS) situated at the 5'-end of the viral RNA. RT uses the 3' end of the tRNA primer to perform a short round of RNA-dependent minus-strand DNA synthesis. The reading proceeds through the U5 region and ends after the repeated (R) region which is present at both ends of viral RNA. The portion of the RNA-DNA heteroduplex is digested by the RNase H, resulting in a ssDNA product attached to the tRNA primer. This ssDNA/tRNA hybridizes with the identical R region situated at the 3' end of viral RNA. This template exchange, known as minus-strand DNA strong stop transfer, can be either intra- or intermolecular. RT uses the 3' end of this newly synthesized short ssDNA to perform the RNA-dependent minus-strand DNA synthesis of the whole template. RNase H digests the RNA template except for a polypurine tract (PPT) situated at the 5' end of the genome. It is not clear if both polymerase and RNase H activities are simultaneous. RNase H probably can proceed both in a polymerase-dependent (RNA cut into small fragments by the same RT performing DNA synthesis) and a polymerase-independent mode (cleavage of remaining RNA fragments by free RTs). Secondly, RT performs DNA-directed plus-strand DNA synthesis using the PPT that has not been removed by RNase H as primer. PPT and tRNA primers are then removed by RNase H. The 3' and 5' ssDNA PBS regions hybridize to form a circular dsDNA intermediate. Strand displacement synthesis by RT to the PBS and PPT ends produces a blunt ended, linear dsDNA copy of the viral genome that includes long terminal repeats (LTRs) at both ends. Functionally, integrase catalyzes viral DNA integration into the host chromosome, by performing a series of DNA cutting and joining reactions. This enzyme activity takes place after virion entry into a cell and reverse transcription of the RNA genome in dsDNA. The first step in the integration process is 3' processing. This step requires a complex comprising the viral genome, matrix protein, and integrase. This complex is called the pre-integration complex (PIC). The integrase protein removes 2 nucleotides from each 3' end of the viral DNA, leaving recessed dinucleotides OH's at the 3' ends. In the second step, the PIC access cell chromosomes during cell division. The third step, termed strand transfer, the integrase protein joins the previously processed 3' ends to the 5'-ends of strands of target cellular DNA at the site of integration. The 5'-ends are produced by integrase-catalyzed staggered cuts, 5 bp apart. A Y-shaped, gapped, recombination intermediate results, with the 5'-ends of the viral DNA strands and the 3' ends of target DNA strands remaining unjoined, flanking a gap of 5 bp. The last step is viral DNA integration into host chromosome. This involves host DNA repair synthesis in which the 5 bp gaps between the unjoined strands (see above) are filled in and then ligated. The protein is Gag-Pro-Pol polyprotein (gag-pro-pol) of Human T-cell leukemia virus 3 (strain Pyl43) (HTLV-3).